Reading from the N-terminus, the 119-residue chain is Large ribosomal subunit protein uL18 (119 aa).

Belongs to the universal ribosomal protein uL18 family. As to quaternary structure, part of the 50S ribosomal subunit; part of the 5S rRNA/L5/L18/L25 subcomplex. Contacts the 5S and 23S rRNAs.

In terms of biological role, this is one of the proteins that bind and probably mediate the attachment of the 5S RNA into the large ribosomal subunit, where it forms part of the central protuberance. This is Large ribosomal subunit protein uL18 from Cereibacter sphaeroides (strain ATCC 17029 / ATH 2.4.9) (Rhodobacter sphaeroides).